Reading from the N-terminus, the 168-residue chain is Group IIF secretory phospholipase A2 (168 aa).

The N-terminal stretch at 1-20 (MKKFFTVAILAGSVLSTAHG) is a signal peptide. 7 disulfide bridges follow: Cys-46/Cys-138, Cys-48/Cys-64, Cys-63/Cys-120, Cys-69/Cys-145, Cys-70/Cys-113, Cys-79/Cys-106, and Cys-98/Cys-111. Residues Tyr-47, Gly-49, and Gly-51 each contribute to the Ca(2+) site. His-67 is an active-site residue. Asp-68 is a binding site for Ca(2+). 2 N-linked (GlcNAc...) asparagine glycosylation sites follow: Asn-92 and Asn-102. Asp-114 is an active-site residue. Asn-123 and Asn-144 each carry an N-linked (GlcNAc...) asparagine glycan. The tract at residues 139–168 (QGPTPNCSIYEPPPEEVTCSHQSPAPPAPP) is required for localization on the plasma membrane.

The protein belongs to the phospholipase A2 family. Ca(2+) serves as cofactor. Expressed at high levels in placenta, testis, thymus and at lower levels in heart, kidney, liver and prostate. Highly expressed in rheumatoid arthritic tissues, including synovial lining cells in the intima, capillary endothelial cells and plasma cells.

The protein localises to the secreted. It localises to the cell membrane. The enzyme catalyses a 1,2-diacyl-sn-glycero-3-phosphocholine + H2O = a 1-acyl-sn-glycero-3-phosphocholine + a fatty acid + H(+). It catalyses the reaction 1-hexadecanoyl-2-(9Z-octadecenoyl)-sn-glycero-3-phospho-(1'-sn-glycerol) + H2O = 1-hexadecanoyl-sn-glycero-3-phospho-(1'-sn-glycerol) + (9Z)-octadecenoate + H(+). The catalysed reaction is 1-hexadecanoyl-2-(9Z,12Z-octadecadienoyl)-sn-glycero-3-phosphoethanolamine + H2O = 1-hexadecanoyl-sn-glycero-3-phosphoethanolamine + (9Z,12Z)-octadecadienoate + H(+). It carries out the reaction 1-hexadecanoyl-2-(5Z,8Z,11Z,14Z-eicosatetraenoyl)-sn-glycero-3-phosphoethanolamine + H2O = 1-hexadecanoyl-sn-glycero-3-phosphoethanolamine + (5Z,8Z,11Z,14Z)-eicosatetraenoate + H(+). The enzyme catalyses 1-hexadecanoyl-2-(9Z-octadecenoyl)-sn-glycero-3-phosphocholine + H2O = 1-hexadecanoyl-sn-glycero-3-phosphocholine + (9Z)-octadecenoate + H(+). It catalyses the reaction 1-hexadecanoyl-2-(9Z-octadecenoyl)-sn-glycero-3-phospho-L-serine + H2O = 1-hexadecanoyl-sn-glycero-3-phospho-L-serine + (9Z)-octadecenoate + H(+). Functionally, secretory calcium-dependent phospholipase A2 that primarily targets extracellular phospholipids. Hydrolyzes the ester bond of the fatty acyl group attached at the sn-2 position of phospholipids (phospholipase A2 activity), the catalytic efficiency decreasing in the following order: phosphatidylglycerols &gt; phosphatidylethanolamines &gt; phosphatidylcholines &gt; phosphatidylserines. May play a role in lipid mediator production in inflammatory conditions, by providing arachidonic acid to downstream cyclooxygenases and lipoxygenases. The polypeptide is Group IIF secretory phospholipase A2 (PLA2G2F) (Homo sapiens (Human)).